A 482-amino-acid polypeptide reads, in one-letter code: Serine carboxypeptidase-like 26 (482 aa).

The N-terminal stretch at M1–A28 is a signal peptide. 3 disulfide bridges follow: C101-C366, C263-C274, and C298-C333. N-linked (GlcNAc...) asparagine glycosylation occurs at N152. The active site involves S194. N-linked (GlcNAc...) asparagine glycosylation is found at N269, N301, N354, and N375. Active-site residues include D403 and H455.

It belongs to the peptidase S10 family.

The protein resides in the secreted. Functionally, acts as a positive regulator of grain size by controlling grain width, filling and weight. High expression of GS5 in the grain is correlated with large grain size. The chain is Serine carboxypeptidase-like 26 from Oryza sativa subsp. japonica (Rice).